The primary structure comprises 477 residues: MADMLGLMQRLEFAVSRLERLSSGLHEPPGGCGEVNSLSRGIVAPSVEAFDKLINSMVAEFLKNSRVLAGDVETHAEMVHGAFQAQRAFLLMVSQHQQPQENEVAVLLKPISEKIQEIQTFRERNRGSDMFNHLSAVSESIAALGWIAVSPKPGPYVKEMNDAATFYTNRVLRDYKHSDLRHVDWVRSYLKIWSELQAYIKEHHTTGLTWSKTGPVASTASAFSILSSGPGLPPPPPPPPPPGPPPPFENEGGKEEPSPSRSALFAQLNQGEAITKGLRHVTDDKKIYKNPSLRAQGQIRSPTKTRTPSPTSSKSNSPQKHAPVLELEGKKWRVEYQEDRNDLVISETELKQVAYIFKCDKSTLQIKGKVNSITVDNCKKFGLVFDHVVGIVEVINSKDIQIQVMGRVPTISINKTEGCHLYLSKDALDCEIVSAKSSEMNVLVPQGDDYREFPIPEQFKTIWDGSKLITEPAEIMA.

Ala-2 carries the post-translational modification N-acetylalanine. 2 disordered regions span residues 224–262 and 274–324; these read SILS…PSRS and ITKG…HAPV. A compositionally biased stretch (pro residues) spans 231-248; it reads GLPPPPPPPPPPGPPPPF. Positions 300-318 are enriched in low complexity; sequence RSPTKTRTPSPTSSKSNSP. Phosphoserine occurs at positions 301 and 309. Positions 318-455 constitute a C-CAP/cofactor C-like domain; sequence PQKHAPVLEL…QGDDYREFPI (138 aa).

This sequence belongs to the CAP family. Found at relatively high levels in testes, at moderate levels in brain, heart and skeletal muscle, at lower levels in lung, skin, kidney and small intestine, and is undetectable in liver or spleen.

Its subcellular location is the cell membrane. Involved in the regulation of actin polymerization. The polypeptide is Adenylyl cyclase-associated protein 2 (Cap2) (Rattus norvegicus (Rat)).